Here is a 120-residue protein sequence, read N- to C-terminus: Small ribosomal subunit protein bS16 (120 aa).

A disordered region spans residues 81 to 120 (GLAKRPTRNNPQKAEPGEKAKERAAKRAEKAAAPAEDAAA). A compositionally biased stretch (basic and acidic residues) spans 95-110 (EPGEKAKERAAKRAEK). Residues 111–120 (AAAPAEDAAA) show a composition bias toward low complexity.

This sequence belongs to the bacterial ribosomal protein bS16 family.

The protein is Small ribosomal subunit protein bS16 of Methylorubrum extorquens (strain CM4 / NCIMB 13688) (Methylobacterium extorquens).